Reading from the N-terminus, the 111-residue chain is Fertilization-influencing membrane protein (111 aa).

The first 23 residues, 1-23 (MKLWLWVAVGVWMLMAELGTIET), serve as a signal peptide directing secretion. A helical transmembrane segment spans residues 85–105 (ILVGTLVVAFFFLLFQFCLHV).

In terms of tissue distribution, testis-specific.

The protein resides in the cell membrane. It localises to the secreted. Plays a role in sperm-oocyte fusion process during fertilization. This Mus musculus (Mouse) protein is Fertilization-influencing membrane protein.